Here is a 409-residue protein sequence, read N- to C-terminus: Microfibrillar-associated protein 3-like (409 aa).

The N-terminal stretch at 1–28 is a signal peptide; the sequence is MGLQKSHLTVCLPPSVPFLILVSTLATA. Residues 29 to 148 lie on the Extracellular side of the membrane; sequence KSVTNSTLNG…TLRVIFTSGD (120 aa). N-linked (GlcNAc...) asparagine glycosylation is found at Asn33, Asn37, Asn67, Asn111, and Asn135. Residues 47–141 enclose the Ig-like C2-type domain; it reads PVIIARTDHI…GTINNTVTLR (95 aa). Cys68 and Cys125 are joined by a disulfide. The chain crosses the membrane as a helical span at residues 149-169; the sequence is MGVYYMVVCLVAFTIVMILNI. Over 170–409 the chain is Cytoplasmic; the sequence is TRLCMMSSHL…NTCIIYESHV (240 aa). Tyr287 bears the Phosphotyrosine mark. 4 positions are modified to phosphoserine: Ser298, Ser303, Ser306, and Ser307. Residues 319–395 form a disordered region; the sequence is VSVHPQSKRD…AHLETTEPAV (77 aa). Residues 325 to 340 are compositionally biased toward basic and acidic residues; the sequence is SKRDHVDDQEGGHFEV. Residues 356-373 are compositionally biased toward low complexity; it reads TAEPSTDITTTELTSEET.

The protein resides in the cell membrane. It is found in the nucleus. It localises to the cytoplasm. Functionally, may participate in the nuclear signaling of EGFR and MAPK1/ERK2. The chain is Microfibrillar-associated protein 3-like (Mfap3l) from Mus musculus (Mouse).